Consider the following 89-residue polypeptide: Large ribosomal subunit protein bL27 (89 aa).

The interval 1–20 (MAHKKAGGSSRNGRDSAGQR) is disordered.

The protein belongs to the bacterial ribosomal protein bL27 family.

This chain is Large ribosomal subunit protein bL27, found in Paramagnetospirillum magneticum (strain ATCC 700264 / AMB-1) (Magnetospirillum magneticum).